We begin with the raw amino-acid sequence, 89 residues long: Small ribosomal subunit protein uS15 (89 aa).

A disordered region spans residues 1–24 (MALTQTKKQELISQYQAHETDTGS).

This sequence belongs to the universal ribosomal protein uS15 family. In terms of assembly, part of the 30S ribosomal subunit. Forms a bridge to the 50S subunit in the 70S ribosome, contacting the 23S rRNA.

One of the primary rRNA binding proteins, it binds directly to 16S rRNA where it helps nucleate assembly of the platform of the 30S subunit by binding and bridging several RNA helices of the 16S rRNA. Its function is as follows. Forms an intersubunit bridge (bridge B4) with the 23S rRNA of the 50S subunit in the ribosome. The chain is Small ribosomal subunit protein uS15 from Microcystis aeruginosa (strain NIES-843 / IAM M-2473).